The sequence spans 623 residues: EIN3-binding F-box protein 2 (623 aa).

In terms of domain architecture, F-box spans 52–106 (QTSIDVLPEECLFEILRRLPSGQERSACACVSKHWLNLLSSISRSEVNESSVQDV). 18 LRR repeats span residues 119 to 147 (GKKATDLRLAAIAVGTSSRGGLGKLQIRG), 151 to 176 (ESKVTDVGLGAVAHGCPSLRIVSLWN), 177 to 202 (LPAVSDLGLSEIARSCPMIEKLDLSR), 203 to 228 (CPGITDSGLVAIAENCVNLSDLTIDS), 229 to 254 (CSGVGNEGLRAIARRCVNLRSISIRS), 255 to 281 (CPRIGDQGVAFLLAQAGSYLTKVKLQM), 307 to 334 (LQGVNEKGFWVMGNAKGLKKLKSLSVMS), 335 to 360 (CRGMTDVGLEAVGNGCPDLKHVSLNK), 361 to 386 (CLLVSGKGLVALAKSALSLESLKLEE), 387 to 413 (CHRINQFGLMGFLMNCGSKLKAFSLAN), 414 to 441 (CLGISDFNSESSLPSPSCSSLRSLSIRC), 442 to 467 (CPGFGDASLAFLGKFCHQLQDVELCG), 468 to 494 (LNGVTDAGVRELLQSNNVGLVKVNLSE), 495 to 521 (CINVSDNTVSAISVCHGRTLESLNLDG), 522 to 547 (CKNITNASLVAVAKNCYSVNDLDISN), 548 to 574 (TLVSDHGIKALASSPNHLNLQVLSIGG), 575 to 600 (CSSITDKSKACIQKLGRTLLGLNIQR), and 601 to 623 (CGRISSSTVDTLLENLWRCDILY).

In terms of assembly, part of a SCF (SKP1-cullin-F-box) protein ligase complex. Interacts with CUL1, SKP1A/ASK1, SKP1B/ASK2, EIN3, and EIL1. Ubiquitous.

It localises to the nucleus. It functions in the pathway protein modification; protein ubiquitination. Functionally, component of SCF(EBF1) E3 ubiquitin ligase complexes, which may mediate the ubiquitination and subsequent proteasomal degradation of target proteins (probably including EIN3 and EIL1). Regulator of the ethylene signaling cascade by modulating the stability of EIN3 and EIL1 proteins. This is EIN3-binding F-box protein 2 (EBF2) from Arabidopsis thaliana (Mouse-ear cress).